A 682-amino-acid polypeptide reads, in one-letter code: MSRKQLALFEPTLVVQALKEAVKKLNPQAQWRNPVMFIVWIGSLLTTFISIAMASGAMPGNALFSAAISAWLWVTVLFANFAEALAEGRSKAQANSLKGVKKTAFARKLREPKYGAAADKVPADQLRKGDIVLVEAGDIIPCDGEVIEGGASVDESAITGESAPVIRESGGDFASVTGGTRILSDWLVIECSVNPGETFLDRMIAMVEGAQRRKTPNEIALTILLIALTIVFLLATATLWPFSAWGGNAVSVTVLVALLVCLIPTTIGGLLSAIGVAGMSRMLGANVIATSGRAVEAAGDVDVLLLDKTGTITLGNRQASEFIPAQGVDEKTLADAAQLASLADETPEGRSIVILAKQRFNLRERDVQSLHATFVPFTAQSRMSGINIDNRMIRKGSVDAIRRHVEANGGHFPADVDQKVDQVARQGATPLVVVEGSRVLGVIALKDIVKGGIKERFAQLRKMGIKTVMITGDNRLTAAAIAAEAGVDDFLAEATPEAKLALIRQYQAEGRLVAMTGDGTNDAPALAQADVAVAMNSGTQAAKEAGNMVDLDSNPTKLIEVVHIGKQMLMTRGSLTTFSIANDVAKYFAIIPAAFAATYPQLNALNIMRLHSPDSAILSAVIFNALIIVFLIPLALKGASYKPLTASAMLRRNLWIYGLGGLLVPFIGIKVIDLLLTVCGLV.

4 helical membrane-spanning segments follow: residues 34-54 (PVMF…IAMA), 62-82 (ALFS…ANFA), 219-239 (IALT…TATL), and 254-274 (VLVA…LSAI). Residue aspartate 307 is the 4-aspartylphosphate intermediate of the active site. ATP contacts are provided by residues aspartate 344, glutamate 348, 377–384 (FTAQSRMS), and lysine 395. Residues aspartate 518 and aspartate 522 each contribute to the Mg(2+) site. 3 consecutive transmembrane segments (helical) span residues 588-608 (FAII…LNIM), 616-636 (AILS…PLAL), and 656-676 (IYGL…DLLL).

It belongs to the cation transport ATPase (P-type) (TC 3.A.3) family. Type IA subfamily. As to quaternary structure, the system is composed of three essential subunits: KdpA, KdpB and KdpC.

The protein resides in the cell inner membrane. The enzyme catalyses K(+)(out) + ATP + H2O = K(+)(in) + ADP + phosphate + H(+). Part of the high-affinity ATP-driven potassium transport (or Kdp) system, which catalyzes the hydrolysis of ATP coupled with the electrogenic transport of potassium into the cytoplasm. This subunit is responsible for energy coupling to the transport system and for the release of the potassium ions to the cytoplasm. The chain is Potassium-transporting ATPase ATP-binding subunit from Escherichia coli (strain SMS-3-5 / SECEC).